A 491-amino-acid chain; its full sequence is MYQKSALELRNAVVSGESSATAIAKYFYNRIKTEDNQIGAFLSLCEERAYEKAAIIDAKVARGEPLGKLAGVPIGIKDNIHIRGLRTTCASKMLENYIAPFDATVVERIEAEDGVILGKLNMDEFAMGSTTQYSAFHPTKNPWGLSCVPGGSSGGSAAAVSARFCPIALGSDTGGSIRQPAAFCGVVGFKPSYGAVSRYGLVAFGSSLDQIGPLTTVVEDVALAMDVFAGKDDRDATSQKFFTGSFQEALSLDVPSLIGVPMGFLDGLRDDVKENFFASLSILERQGSRIVEVDLNILDHAVSVYYIVASAEAATNLARFDGIRYGYRSPEAHSIEDIYTISRVQGFGKEVMRRILLGNYVLSTERQNVYYKKGSAIRAKIIQAFQKAYEKCDVIAMPVCSCPAFADGEILDPTSLYLQDIYTVAMNLAYLPAIAVPSGFSREGLPLGFQVIGQKGKDQQVCQVGYSFQEHSGIKNLYPKGCNKLVDGEVK.

Active-site charge relay system residues include K77 and S152. S176 functions as the Acyl-ester intermediate in the catalytic mechanism.

Belongs to the amidase family. GatA subfamily. In terms of assembly, heterotrimer of A, B and C subunits.

The catalysed reaction is L-glutamyl-tRNA(Gln) + L-glutamine + ATP + H2O = L-glutaminyl-tRNA(Gln) + L-glutamate + ADP + phosphate + H(+). Its function is as follows. Allows the formation of correctly charged Gln-tRNA(Gln) through the transamidation of misacylated Glu-tRNA(Gln) in organisms which lack glutaminyl-tRNA synthetase. The reaction takes place in the presence of glutamine and ATP through an activated gamma-phospho-Glu-tRNA(Gln). This chain is Glutamyl-tRNA(Gln) amidotransferase subunit A, found in Chlamydia abortus (strain DSM 27085 / S26/3) (Chlamydophila abortus).